The following is a 203-amino-acid chain: 3-isopropylmalate dehydratase small subunit (203 aa).

The protein belongs to the LeuD family. LeuD type 1 subfamily. As to quaternary structure, heterodimer of LeuC and LeuD.

It catalyses the reaction (2R,3S)-3-isopropylmalate = (2S)-2-isopropylmalate. Its pathway is amino-acid biosynthesis; L-leucine biosynthesis; L-leucine from 3-methyl-2-oxobutanoate: step 2/4. Functionally, catalyzes the isomerization between 2-isopropylmalate and 3-isopropylmalate, via the formation of 2-isopropylmaleate. In Symbiobacterium thermophilum (strain DSM 24528 / JCM 14929 / IAM 14863 / T), this protein is 3-isopropylmalate dehydratase small subunit.